Consider the following 180-residue polypeptide: UPF0340 protein LL0489 (180 aa).

Belongs to the UPF0340 family.

The chain is UPF0340 protein LL0489 (yeiF) from Lactococcus lactis subsp. lactis (strain IL1403) (Streptococcus lactis).